The primary structure comprises 119 residues: Large ribosomal subunit protein uL24 (119 aa).

It belongs to the universal ribosomal protein uL24 family. In terms of assembly, part of the 50S ribosomal subunit.

Its function is as follows. One of two assembly initiator proteins, it binds directly to the 5'-end of the 23S rRNA, where it nucleates assembly of the 50S subunit. Functionally, located at the polypeptide exit tunnel on the outside of the subunit. This chain is Large ribosomal subunit protein uL24, found in Methanosarcina acetivorans (strain ATCC 35395 / DSM 2834 / JCM 12185 / C2A).